A 571-amino-acid polypeptide reads, in one-letter code: Putative fatty-acid--CoA ligase fadD11 (571 aa).

The segment covering 1-19 (MARLRGAGAAGRCRPGRFG) has biased composition (low complexity). Disordered regions lie at residues 1–35 (MARLRGAGAAGRCRPGRFGSSARRHGLADDGEPDR) and 67–91 (RQRGDQGGHLRATVRRSRSRQRCAH). Over residues 78 to 91 (ATVRRSRSRQRCAH) the composition is skewed to basic residues. Transmembrane regions (helical) follow at residues 314–334 (TLAFFAGIGIPIAEIWGMSEL) and 431–451 (ANIENTILAACPMVGVMMAIG).

This sequence belongs to the ATP-dependent AMP-binding enzyme family.

Its subcellular location is the cell membrane. The protein is Putative fatty-acid--CoA ligase fadD11 (fadD11) of Mycobacterium tuberculosis (strain CDC 1551 / Oshkosh).